The following is an 88-amino-acid chain: Small ribosomal subunit protein uS17c (88 aa).

It belongs to the universal ribosomal protein uS17 family. In terms of assembly, part of the 30S ribosomal subunit.

The protein localises to the plastid. It is found in the cyanelle. In terms of biological role, one of the primary rRNA binding proteins, it binds specifically to the 5'-end of 16S ribosomal RNA. This chain is Small ribosomal subunit protein uS17c (rps17), found in Cyanophora paradoxa.